Here is a 588-residue protein sequence, read N- to C-terminus: Disabled homolog 1 (588 aa).

The interval 1-26 (MSTETELQVAVKTSAKKDSRKKGQDR) is disordered. Basic and acidic residues predominate over residues 15-26 (AKKDSRKKGQDR). A PID domain is found at 36-189 (KGEGVRYKAK…CEQAVYQTIL (154 aa)). A phosphotyrosine mark is found at Tyr-198, Tyr-220, and Tyr-232. Disordered stretches follow at residues 224–243 (TSQKKEGVYDVPKSQPNSQP), 420–444 (LATVPGTNDSARSSPQSDKPRQKMG), 451–470 (FQMVQPPPVPSRKPDQPSLT), and 502–588 (LTPV…QDGS). Polar residues predominate over residues 424–436 (PGTNDSARSSPQS). Low complexity-rich tracts occupy residues 503–512 (TPVTSTTPST) and 523–534 (SSPSKSSASHVS). Ser-524 carries the phosphoserine; by CDK5 modification. Acidic residues predominate over residues 537 to 546 (TADDIFEEGF).

As to quaternary structure, associates with the SH2 domains of SRC, FYN and ABL. Interacts (phosphorylated on tyrosine residues) with CRK and CRKL (via respective SH2 domain). Interacts with SIAH1, LRP8 and VLDLR. Interacts with LRP1. Interacts with APLP1 (via NPXY motif). Interacts with DAB2IP. Interacts with ZSWIM8. Post-translationally, phosphorylated by FYN on Tyr-198 and Tyr-220 upon reelin induction in embryonic neurons. Also found phosphorylated on Tyr-232 upon reelin induction. Also phosphorylated on Ser-524 independently of reelin signaling. Ubiquitinated by various cullin-5-RING E3 ubiquitin-protein ligase complexes (ECS complexes) following ligand-binding and phosphorylation, leading to its degradation. Ubiquitinated by the ECS(SOCS7) complex in the cortical plate of the developing cerebral cortex following ligand-binding and phosphorylation by FYN, leading to its degradation by the proteasome. Recognized by ZSWIM8 through a disorder targets misorder mechanism that eliminates misfolded DAB1 via ubiquitination and proteasomal degradation. In terms of tissue distribution, expressed mainly in brain. Specifically expressin in cortical neurons.

The protein localises to the cytoplasm. In terms of biological role, signaling adapter of the reelin-mediated signaling pathway, which regulates the migration and differentiation of postmitotic neurons during brain development. Mediates intracellular transduction of Reelin signaling following reelin (RELN)-binding to its receptor: acts by docking proteins through its phosphotyrosine residues and PID domain. The chain is Disabled homolog 1 from Mus musculus (Mouse).